The chain runs to 142 residues: Transcriptional regulator MraZ (142 aa).

SpoVT-AbrB domains are found at residues 5-47 and 76-119; these read EYPY…PLAS and ANKA…NPGR.

The protein belongs to the MraZ family. In terms of assembly, forms oligomers.

The protein resides in the cytoplasm. It is found in the nucleoid. This Deinococcus deserti (strain DSM 17065 / CIP 109153 / LMG 22923 / VCD115) protein is Transcriptional regulator MraZ.